The sequence spans 215 residues: Small ribosomal subunit protein uS7 (215 aa).

Belongs to the universal ribosomal protein uS7 family. Part of the 30S ribosomal subunit.

In terms of biological role, one of the primary rRNA binding proteins, it binds directly to 16S rRNA where it nucleates assembly of the head domain of the 30S subunit. Is located at the subunit interface close to the decoding center. In Thermococcus gammatolerans (strain DSM 15229 / JCM 11827 / EJ3), this protein is Small ribosomal subunit protein uS7.